Reading from the N-terminus, the 445-residue chain is Histamine H3 receptor (445 aa).

Residues 1 to 39 are Extracellular-facing; it reads MERAPPDGPLNASGALAGEAAAAGGARGFSAAWTAVLAA. A glycan (N-linked (GlcNAc...) asparagine) is linked at Asn11. Residues 40-60 form a helical membrane-spanning segment; that stretch reads LMALLIVATVLGNALVMLAFV. The Cytoplasmic portion of the chain corresponds to 61 to 70; the sequence is ADSSLRTQNN. The helical transmembrane segment at 71 to 91 threads the bilayer; that stretch reads FFLLNLAISDFLVGAFCIPLY. The Extracellular segment spans residues 92 to 108; that stretch reads VPYVLTGRWTFGRGLCK. Residues Cys107 and Cys188 are joined by a disulfide bond. The helical transmembrane segment at 109–129 threads the bilayer; sequence LWLVVDYLLCTSSAFNIVLIS. Residues 130–156 lie on the Cytoplasmic side of the membrane; the sequence is YDRFLSVTRAVSYRAQQGDTRRAVRKM. Residues 157–177 traverse the membrane as a helical segment; that stretch reads LLVWVLAFLLYGPAILSWEYL. Over 178–196 the chain is Extracellular; the sequence is SGGSSIPEGHCYAEFFYNW. Residues 197–217 traverse the membrane as a helical segment; that stretch reads YFLITASTLEFFTPFLSVTFF. Residues 218-359 lie on the Cytoplasmic side of the membrane; it reads NLSIYLNIQR…LSRDRKVAKS (142 aa). 2 disordered regions span residues 237 to 260 and 288 to 336; these read REAA…GCWG and EATL…LEKR. A compositionally biased stretch (pro residues) spans 242 to 257; sequence PEPPPEAQPSPPPPPG. Residues 290-299 are compositionally biased toward gly residues; it reads TLGGGGGGGS. A compositionally biased stretch (low complexity) spans 300–312; it reads VASPTSSSGSSSR. The chain crosses the membrane as a helical span at residues 360–380; it reads LAVIVSIFGLCWAPYTLLMII. At 381 to 395 the chain is on the extracellular side; that stretch reads RAACHGHCVPDYWYE. Residues 396–416 traverse the membrane as a helical segment; it reads TSFWLLWANSAVNPVLYPLCH. At 417–445 the chain is on the cytoplasmic side; sequence HSFRRAFTKLLCPQKLKIQPHSSLEHCWK. Ser439 is modified (phosphoserine).

It belongs to the G-protein coupled receptor 1 family. Expressed predominantly in the CNS, with the greatest expression in the thalamus and caudate nucleus. The various isoforms are mainly coexpressed in brain, but their relative expression level varies in a region-specific manner. Isoform 3 and isoform 7 are highly expressed in the thalamus, caudate nucleus and cerebellum while isoform 5 and isoform 6 show a poor expression. Isoform 5 and isoform 6 show a high expression in the amygdala, substantia nigra, cerebral cortex and hypothalamus. Isoform 7 is not found in hypothalamus or substantia nigra.

The protein resides in the cell membrane. Its function is as follows. The H3 subclass of histamine receptors could mediate the histamine signals in CNS and peripheral nervous system. Signals through the inhibition of adenylate cyclase and displays high constitutive activity (spontaneous activity in the absence of agonist). Agonist stimulation of isoform 3 neither modified adenylate cyclase activity nor induced intracellular calcium mobilization. This chain is Histamine H3 receptor (HRH3), found in Homo sapiens (Human).